The primary structure comprises 301 residues: MNGILPLYKPTGMTSADAVYHARKILGIKKIGHSGTLDPNVDGVLPLAIGAGTKAVPQLMASGKVYTGEITLGFATTTEDLDGEVVDKTPLTQPFTADQLDAALTAWTGNITQIPPMFSAVKVNGRRLYEYARAGETVKRPERQATVSQFTRTDEPVFSATDGTQRFRFEVHVSKGTYIRTLAVDVGKTLGVAAVMSQLTRVKSGGFTLKQAVSIEQLKAHAAAGTLADVIQPIDIAFADLPQVDLTVEQFEAISHGRFLSLDQQTPRVRLHFAGVLKAIYRREDDQYRPDLMFLANEKNV.

The active-site Nucleophile is aspartate 38.

The protein belongs to the pseudouridine synthase TruB family. Type 1 subfamily.

It carries out the reaction uridine(55) in tRNA = pseudouridine(55) in tRNA. Functionally, responsible for synthesis of pseudouridine from uracil-55 in the psi GC loop of transfer RNAs. This chain is tRNA pseudouridine synthase B, found in Lacticaseibacillus paracasei (strain ATCC 334 / BCRC 17002 / CCUG 31169 / CIP 107868 / KCTC 3260 / NRRL B-441) (Lactobacillus paracasei).